Here is a 51-residue protein sequence, read N- to C-terminus: Large ribosomal subunit protein bL33 (51 aa).

Belongs to the bacterial ribosomal protein bL33 family.

The sequence is that of Large ribosomal subunit protein bL33 from Acidithiobacillus ferrooxidans (strain ATCC 53993 / BNL-5-31) (Leptospirillum ferrooxidans (ATCC 53993)).